Consider the following 637-residue polypeptide: Chaperone protein DnaK (637 aa).

At threonine 198 the chain carries Phosphothreonine; by autocatalysis. The interval 597 to 637 (MYQQQAEGDAARDAAQDAAKDDVVDAEFTEVDDDKNDKKSA) is disordered. The span at 605 to 619 (DAARDAAQDAAKDDV) shows a compositional bias: basic and acidic residues. Residues 620-630 (VDAEFTEVDDD) show a composition bias toward acidic residues.

Belongs to the heat shock protein 70 family.

In terms of biological role, acts as a chaperone. The chain is Chaperone protein DnaK from Afipia carboxidovorans (strain ATCC 49405 / DSM 1227 / KCTC 32145 / OM5) (Oligotropha carboxidovorans).